Reading from the N-terminus, the 603-residue chain is Aspartate--tRNA(Asp/Asn) ligase (603 aa).

The interval Gln-205–Lys-208 is aspartate. L-aspartate is bound at residue Arg-227. Residues Arg-227–Glu-229 and Gln-236 contribute to the ATP site. His-463 provides a ligand contact to L-aspartate. Glu-497 contacts ATP. Arg-504 lines the L-aspartate pocket. Gly-549 to Arg-552 is an ATP binding site.

It belongs to the class-II aminoacyl-tRNA synthetase family. Type 1 subfamily. In terms of assembly, homodimer.

The protein resides in the cytoplasm. It catalyses the reaction tRNA(Asx) + L-aspartate + ATP = L-aspartyl-tRNA(Asx) + AMP + diphosphate. Its function is as follows. Aspartyl-tRNA synthetase with relaxed tRNA specificity since it is able to aspartylate not only its cognate tRNA(Asp) but also tRNA(Asn). Reaction proceeds in two steps: L-aspartate is first activated by ATP to form Asp-AMP and then transferred to the acceptor end of tRNA(Asp/Asn). This chain is Aspartate--tRNA(Asp/Asn) ligase, found in Anaeromyxobacter sp. (strain K).